A 252-amino-acid chain; its full sequence is 3-dehydroquinate dehydratase (252 aa).

3-dehydroquinate is bound by residues 46–48 (EWR) and R82. The active-site Proton donor/acceptor is H143. Catalysis depends on K170, which acts as the Schiff-base intermediate with substrate. R212, S231, and Q235 together coordinate 3-dehydroquinate.

The protein belongs to the type-I 3-dehydroquinase family. In terms of assembly, homodimer.

It carries out the reaction 3-dehydroquinate = 3-dehydroshikimate + H2O. The protein operates within metabolic intermediate biosynthesis; chorismate biosynthesis; chorismate from D-erythrose 4-phosphate and phosphoenolpyruvate: step 3/7. Functionally, involved in the third step of the chorismate pathway, which leads to the biosynthesis of aromatic amino acids. Catalyzes the cis-dehydration of 3-dehydroquinate (DHQ) and introduces the first double bond of the aromatic ring to yield 3-dehydroshikimate. This is 3-dehydroquinate dehydratase from Listeria welshimeri serovar 6b (strain ATCC 35897 / DSM 20650 / CCUG 15529 / CIP 8149 / NCTC 11857 / SLCC 5334 / V8).